Reading from the N-terminus, the 309-residue chain is GTPase Era (309 aa).

The region spanning 16 to 186 (HAGFVAIVGK…REQILDALPE (171 aa)) is the Era-type G domain. The interval 24–31 (GKPNVGKS) is G1. Position 24–31 (24–31 (GKPNVGKS)) interacts with GTP. The G2 stretch occupies residues 50-54 (QTTRR). A G3 region spans residues 71–74 (DTPG). Residues 71–75 (DTPGL) and 133–136 (NKVD) each bind GTP. Residues 133–136 (NKVD) form a G4 region. Residues 164–166 (LSA) form a G5 region. In terms of domain architecture, KH type-2 spans 217–294 (LREELPYAVA…FLGLEVIVIP (78 aa)).

This sequence belongs to the TRAFAC class TrmE-Era-EngA-EngB-Septin-like GTPase superfamily. Era GTPase family. Monomer.

The protein resides in the cytoplasm. It is found in the cell membrane. Its function is as follows. An essential GTPase that binds both GDP and GTP, with rapid nucleotide exchange. Plays a role in 16S rRNA processing and 30S ribosomal subunit biogenesis and possibly also in cell cycle regulation and energy metabolism. The chain is GTPase Era from Deinococcus geothermalis (strain DSM 11300 / CIP 105573 / AG-3a).